We begin with the raw amino-acid sequence, 414 residues long: Esterase FrsA (414 aa).

It belongs to the FrsA family.

It catalyses the reaction a carboxylic ester + H2O = an alcohol + a carboxylate + H(+). In terms of biological role, catalyzes the hydrolysis of esters. The chain is Esterase FrsA from Salmonella dublin (strain CT_02021853).